The primary structure comprises 448 residues: 26S proteasome regulatory subunit 4 homolog (448 aa).

Residues 1–10 (MGQAQSGNFS) show a composition bias toward polar residues. A disordered region spans residues 1 to 58 (MGQAQSGNFSNFGDGANGDNKKDQKKDKPKYEPPVPTRTGRRKKKAQSGPDASAKLPT). The segment covering 19–31 (DNKKDQKKDKPKY) has biased composition (basic and acidic residues). Position 232–239 (232–239 (GAPGTGKT)) interacts with ATP.

This sequence belongs to the AAA ATPase family.

The protein localises to the cytoplasm. Its subcellular location is the nucleus. The 26S proteasome is involved in the ATP-dependent degradation of ubiquitinated proteins. The regulatory (or ATPase) complex confers ATP dependency and substrate specificity to the 26S complex. In Schizosaccharomyces pombe (strain 972 / ATCC 24843) (Fission yeast), this protein is 26S proteasome regulatory subunit 4 homolog (mts2).